The sequence spans 229 residues: Large ribosomal subunit protein uL1 (229 aa).

This sequence belongs to the universal ribosomal protein uL1 family. In terms of assembly, part of the 50S ribosomal subunit.

Functionally, binds directly to 23S rRNA. The L1 stalk is quite mobile in the ribosome, and is involved in E site tRNA release. Protein L1 is also a translational repressor protein, it controls the translation of the L11 operon by binding to its mRNA. In Clostridium perfringens (strain ATCC 13124 / DSM 756 / JCM 1290 / NCIMB 6125 / NCTC 8237 / Type A), this protein is Large ribosomal subunit protein uL1.